Reading from the N-terminus, the 715-residue chain is Putative macrophage stimulating 1-like protein (715 aa).

The signal sequence occupies residues 1–20 (MAPAPVTLLAPGAASSMSCS). One can recognise a PAN domain in the interval 21 to 110 (QPGQRSPSND…GRCDLFQEKG (90 aa)). 4 consecutive Kringle domains span residues 63–156 (GRCG…IKSC), 160–238 (ACVW…LPRC), 252–345 (SCFR…IRRC), and 353–464 (DCYH…LRRC). Intrachain disulfides connect Cys127/Cys151, Cys161/Cys238, Cys182/Cys221, Cys210/Cys233, Cys253/Cys345, Cys316/Cys339, Cys354/Cys464, Cys375/Cys447, Cys511/Cys527, Cys606/Cys671, Cys636/Cys650, and Cys661/Cys689. The Peptidase S1 domain occupies 488–713 (VAGGHPGNSP…FVDWIHKVMR (226 aa)).

This sequence belongs to the peptidase S1 family. Plasminogen subfamily.

It is found in the secreted. The chain is Putative macrophage stimulating 1-like protein (MST1L) from Homo sapiens (Human).